A 382-amino-acid polypeptide reads, in one-letter code: RNA binding protein fox-1 homolog 1-like (382 aa).

Disordered regions lie at residues 34 to 79 (QEAG…AAHP) and 94 to 148 (GPQH…QPKR). Over residues 49-65 (YAPPPSYPPPGQAPPTP) the composition is skewed to pro residues. Residues 101–110 (ESITASNTDD) show a composition bias toward polar residues. The RRM domain maps to 147 to 223 (KRLHVSNIPF…RKIEVNNATA (77 aa)).

In terms of tissue distribution, expressed during muscle development in adaxial cells, somites, cardiac precursors, finbuds and jaw muscle cells.

The protein resides in the nucleus. Functionally, RNA-binding protein that regulates alternative splicing events by binding to 5'-GCAUG-3' elements. Regulates alternative splicing of tissue-specific exons. The polypeptide is RNA binding protein fox-1 homolog 1-like (rbfox1l) (Danio rerio (Zebrafish)).